The chain runs to 380 residues: Cytochrome b (380 aa).

The next 4 membrane-spanning stretches (helical) occupy residues 34 to 54, 78 to 99, 114 to 134, and 179 to 199; these read FGSL…LLAM, WLIR…YLHI, WNTG…GYVL, and FFAL…IHLT. Histidine 84 and histidine 98 together coordinate heme b. Residues histidine 183 and histidine 197 each contribute to the heme b site. Histidine 202 is an a ubiquinone binding site. The next 4 membrane-spanning stretches (helical) occupy residues 227-247, 289-309, 321-341, and 348-368; these read TKDI…ALFS, LGGV…PLLH, LSQL…WIGS, and FIII…ILFP.

The protein belongs to the cytochrome b family. As to quaternary structure, the cytochrome bc1 complex contains 11 subunits: 3 respiratory subunits (MT-CYB, CYC1 and UQCRFS1), 2 core proteins (UQCRC1 and UQCRC2) and 6 low-molecular weight proteins (UQCRH/QCR6, UQCRB/QCR7, UQCRQ/QCR8, UQCR10/QCR9, UQCR11/QCR10 and a cleavage product of UQCRFS1). This cytochrome bc1 complex then forms a dimer. The cofactor is heme b.

It is found in the mitochondrion inner membrane. In terms of biological role, component of the ubiquinol-cytochrome c reductase complex (complex III or cytochrome b-c1 complex) that is part of the mitochondrial respiratory chain. The b-c1 complex mediates electron transfer from ubiquinol to cytochrome c. Contributes to the generation of a proton gradient across the mitochondrial membrane that is then used for ATP synthesis. The sequence is that of Cytochrome b (MT-CYB) from Pygoscelis antarcticus (Chinstrap penguin).